Here is a 120-residue protein sequence, read N- to C-terminus: MYLFSEYDTFWIYLSISSLIPILAFSISRSLAPISKGAEKATSYESGIEPMGDTWIQFRIRYYMFALVFVVFDVETVFLYPWAMSFDILGLFTFIEAFIFVIILIVGLVYAWRKGALEWS.

A run of 3 helical transmembrane segments spans residues 7–27, 64–84, and 88–108; these read YDTF…AFSI, MFAL…PWAM, and ILGL…IVGL.

Belongs to the complex I subunit 3 family. NDH is composed of at least 16 different subunits, 5 of which are encoded in the nucleus.

The protein resides in the plastid. Its subcellular location is the chloroplast thylakoid membrane. The catalysed reaction is a plastoquinone + NADH + (n+1) H(+)(in) = a plastoquinol + NAD(+) + n H(+)(out). It catalyses the reaction a plastoquinone + NADPH + (n+1) H(+)(in) = a plastoquinol + NADP(+) + n H(+)(out). Its function is as follows. NDH shuttles electrons from NAD(P)H:plastoquinone, via FMN and iron-sulfur (Fe-S) centers, to quinones in the photosynthetic chain and possibly in a chloroplast respiratory chain. The immediate electron acceptor for the enzyme in this species is believed to be plastoquinone. Couples the redox reaction to proton translocation, and thus conserves the redox energy in a proton gradient. This chain is NAD(P)H-quinone oxidoreductase subunit 3, chloroplastic, found in Cryptomeria japonica (Japanese cedar).